A 314-amino-acid chain; its full sequence is Putative gluconeogenesis factor (314 aa).

It belongs to the gluconeogenesis factor family.

The protein localises to the cytoplasm. Required for morphogenesis under gluconeogenic growth conditions. This chain is Putative gluconeogenesis factor, found in Thermotoga maritima (strain ATCC 43589 / DSM 3109 / JCM 10099 / NBRC 100826 / MSB8).